The chain runs to 947 residues: Bifunctional glutamine synthetase adenylyltransferase/adenylyl-removing enzyme (947 aa).

An adenylyl removase region spans residues 1-440 (MTPLSSPLSQ…VFNELIGDDE (440 aa)). Residues 450–947 (SEPWREVWQD…ASWRKWLVAV (498 aa)) form an adenylyl transferase region.

Belongs to the GlnE family. Requires Mg(2+) as cofactor.

The catalysed reaction is [glutamine synthetase]-O(4)-(5'-adenylyl)-L-tyrosine + phosphate = [glutamine synthetase]-L-tyrosine + ADP. It carries out the reaction [glutamine synthetase]-L-tyrosine + ATP = [glutamine synthetase]-O(4)-(5'-adenylyl)-L-tyrosine + diphosphate. In terms of biological role, involved in the regulation of glutamine synthetase GlnA, a key enzyme in the process to assimilate ammonia. When cellular nitrogen levels are high, the C-terminal adenylyl transferase (AT) inactivates GlnA by covalent transfer of an adenylyl group from ATP to specific tyrosine residue of GlnA, thus reducing its activity. Conversely, when nitrogen levels are low, the N-terminal adenylyl removase (AR) activates GlnA by removing the adenylyl group by phosphorolysis, increasing its activity. The regulatory region of GlnE binds the signal transduction protein PII (GlnB) which indicates the nitrogen status of the cell. The protein is Bifunctional glutamine synthetase adenylyltransferase/adenylyl-removing enzyme of Salmonella typhimurium (strain LT2 / SGSC1412 / ATCC 700720).